Reading from the N-terminus, the 298-residue chain is MNMANLKAVIPVAGLGMHMLPATKAIPKEMLPIVDKPMIQYIVDEIVAAGIKEIVLVTHSSKNAVENHFDTSYELEALLEQRVKRQLLAEVQAICPPGVTIMNVRQAQPLGLGHSILCARPVVGDNPFVVVLPDIILDGGTADPLRYNLAAMIARFNETGRSQVLAKRMPGDLSEYSVIQTKEPMVAEGQVARIVEFIEKPDEPQTLDSDLMAVGRYVLSADIWAELERTEPGAWGRIQLTDAIAELAKKQSVDAMLMTGESYDCGKKMGYMQAFVTYGMRNLKEGAKFRESIKKLLA.

This sequence belongs to the UDPGP type 2 family.

The enzyme catalyses alpha-D-glucose 1-phosphate + UTP + H(+) = UDP-alpha-D-glucose + diphosphate. Its pathway is carbohydrate metabolism; nucleotide-sugar metabolism. It participates in capsule biogenesis; capsule polysaccharide biosynthesis. The polypeptide is UTP--glucose-1-phosphate uridylyltransferase (galF) (Klebsiella pneumoniae).